The sequence spans 55 residues: Large ribosomal subunit protein bL33 (55 aa).

The protein belongs to the bacterial ribosomal protein bL33 family.

This chain is Large ribosomal subunit protein bL33, found in Sphingopyxis alaskensis (strain DSM 13593 / LMG 18877 / RB2256) (Sphingomonas alaskensis).